The primary structure comprises 1305 residues: Contactin-associated protein-like 5 (1305 aa).

The signal sequence occupies residues methionine 1–threonine 22. Positions alanine 23–cysteine 174 constitute an F5/8 type C domain. Residues alanine 23–serine 1236 are Extracellular-facing. 2 consecutive Laminin G-like domains span residues isoleucine 180–cysteine 360 and proline 367–cysteine 544. Cystine bridges form between cysteine 329–cysteine 360, cysteine 512–cysteine 544, cysteine 550–cysteine 561, cysteine 555–cysteine 570, and cysteine 572–cysteine 582. One can recognise an EGF-like 1 domain in the interval isoleucine 546–histidine 583. The region spanning asparagine 584–tryptophan 790 is the Fibrinogen C-terminal domain. The Laminin G-like 3 domain maps to asparagine 791–cysteine 956. Disulfide bonds link cysteine 929/cysteine 956, cysteine 960/cysteine 973, cysteine 967/cysteine 982, cysteine 984/cysteine 994, and cysteine 1163/cysteine 1198. The 39-residue stretch at proline 957–lysine 995 folds into the EGF-like 2 domain. The Laminin G-like 4 domain occupies proline 1017–cysteine 1198. The chain crosses the membrane as a helical span at residues alanine 1237 to methionine 1257. At serine 1258–isoleucine 1305 the chain is on the cytoplasmic side.

Belongs to the neurexin family. Expressed in brain.

It localises to the membrane. In terms of biological role, may play a role in the correct development and proper functioning of the peripheral and central nervous system and be involved in cell adhesion and intercellular communication. The protein is Contactin-associated protein-like 5 (CNTNAP5) of Gallus gallus (Chicken).